The sequence spans 495 residues: Cytochrome P450 monooxygenase 88 (495 aa).

A helical membrane pass occupies residues 2 to 22; the sequence is FLQIVTSVLATGLLYALISVL. 2 N-linked (GlcNAc...) asparagine glycosylation sites follow: asparagine 25 and asparagine 198. Cysteine 428 serves as a coordination point for heme.

The protein belongs to the cytochrome P450 family. Requires heme as cofactor.

It localises to the membrane. It participates in secondary metabolite biosynthesis. In terms of biological role, cytochrome P450 monooxygenase that is able to use 4-ethoxybenzoic acid as a substrate for oxidation. This is Cytochrome P450 monooxygenase 88 from Postia placenta (strain ATCC 44394 / Madison 698-R) (Brown rot fungus).